The chain runs to 139 residues: Transcription antitermination protein NusB (139 aa).

This sequence belongs to the NusB family.

Involved in transcription antitermination. Required for transcription of ribosomal RNA (rRNA) genes. Binds specifically to the boxA antiterminator sequence of the ribosomal RNA (rrn) operons. The chain is Transcription antitermination protein NusB from Limosilactobacillus fermentum (strain NBRC 3956 / LMG 18251) (Lactobacillus fermentum).